The chain runs to 349 residues: UDP-N-acetylenolpyruvoylglucosamine reductase (349 aa).

In terms of domain architecture, FAD-binding PCMH-type spans 25-197 (GIAARARFAA…VAVTFRLPKQ (173 aa)). Residue Arg-173 is part of the active site. Ser-249 functions as the Proton donor in the catalytic mechanism. The active site involves Glu-345.

The protein belongs to the MurB family. Requires FAD as cofactor.

Its subcellular location is the cytoplasm. The catalysed reaction is UDP-N-acetyl-alpha-D-muramate + NADP(+) = UDP-N-acetyl-3-O-(1-carboxyvinyl)-alpha-D-glucosamine + NADPH + H(+). The protein operates within cell wall biogenesis; peptidoglycan biosynthesis. In terms of biological role, cell wall formation. The sequence is that of UDP-N-acetylenolpyruvoylglucosamine reductase from Burkholderia orbicola (strain MC0-3).